The sequence spans 545 residues: Methionine--tRNA ligase (545 aa).

The short motif at 13-23 is the 'HIGH' region element; the sequence is PYANGPLHIGH. Zn(2+) contacts are provided by cysteine 144, cysteine 147, cysteine 157, and cysteine 160. The short motif at 330–334 is the 'KMSKS' region element; sequence KISKS. Lysine 333 provides a ligand contact to ATP.

The protein belongs to the class-I aminoacyl-tRNA synthetase family. MetG type 1 subfamily. In terms of assembly, monomer. Requires Zn(2+) as cofactor.

It is found in the cytoplasm. It catalyses the reaction tRNA(Met) + L-methionine + ATP = L-methionyl-tRNA(Met) + AMP + diphosphate. Its function is as follows. Is required not only for elongation of protein synthesis but also for the initiation of all mRNA translation through initiator tRNA(fMet) aminoacylation. The sequence is that of Methionine--tRNA ligase from Blochmanniella floridana.